We begin with the raw amino-acid sequence, 332 residues long: Acryloyl-coenzyme A reductase (332 aa).

C38 contributes to the Zn(2+) binding site. Y39 is a binding site for NADP(+). Positions 60, 90, 93, 96, 104, and 146 each coordinate Zn(2+). Residues 172-175 (SGGV) and 194-196 (TTS) contribute to the NADP(+) site.

The protein belongs to the zinc-containing alcohol dehydrogenase family. In terms of assembly, monomer. It depends on Zn(2+) as a cofactor.

The enzyme catalyses propanoyl-CoA + NADP(+) = acryloyl-CoA + NADPH + H(+). Plays a role in autotrophic carbon fixation via the 3-hydroxypropionate/4-hydroxybutyrate cycle. Catalyzes the acryloyl-CoA dependent NADPH oxidation and formation of propionyl-CoA. This chain is Acryloyl-coenzyme A reductase, found in Metallosphaera sedula (strain ATCC 51363 / DSM 5348 / JCM 9185 / NBRC 15509 / TH2).